Here is a 650-residue protein sequence, read N- to C-terminus: Phosphatidylinositol 4-kinase gamma 7 (650 aa).

The 58-residue stretch at 46 to 103 (RRVFVQTETGCVLGMELDRSDNVHTVKRRLQIALNFPTEESSLTYGDMVLTNDLSAVR) folds into the Ubiquitin-like; degenerate domain. Residues 166–463 (GVEPLPVHSG…SVTERDVFSP (298 aa)) form the PI3K/PI4K catalytic domain. The tract at residues 172-178 (VHSGLGG) is G-loop. ATP-binding positions include 173 to 179 (HSGLGGA), K194, and 283 to 286 (QKFV). A catalytic loop region spans residues 316–324 (FNTDRHGGN). The interval 343–369 (PIDHGLCLPETLEDPYFEWIHWPQASL) is activation loop. D345 serves as a coordination point for ATP. 2 disordered regions span residues 508-534 (SLGK…ENTV) and 560-595 (STSM…KSAN). The span at 516–529 (IKEEEEDEEEEEDK) shows a compositional bias: acidic residues. 2 stretches are compositionally biased toward polar residues: residues 560 to 569 (STSMKNTHLS) and 585 to 595 (ENTSSGHKSAN). S593 carries the phosphoserine modification.

The protein belongs to the PI3/PI4-kinase family. Type II PI4K subfamily.

It carries out the reaction a 1,2-diacyl-sn-glycero-3-phospho-(1D-myo-inositol) + ATP = a 1,2-diacyl-sn-glycero-3-phospho-(1D-myo-inositol 4-phosphate) + ADP + H(+). In terms of biological role, the phosphorylation of phosphatidylinositol (PI) to PI4P is the first committed step in the generation of phosphatidylinositol 4,5-bisphosphate (PIP2), a precursor of the second messenger inositol 1,4,5-trisphosphate (InsP3). Undergoes autophosphorylation and phosphorylates serine/threonine residues of protein substrates. In Arabidopsis thaliana (Mouse-ear cress), this protein is Phosphatidylinositol 4-kinase gamma 7.